A 137-amino-acid chain; its full sequence is Peptide methionine sulfoxide reductase MsrB (137 aa).

In terms of domain architecture, MsrB spans 7–129; that stretch reads AEELKKNLSE…NSASLRFTDG (123 aa). C46, C49, C95, and C98 together coordinate Zn(2+). The active-site Nucleophile is the C118.

It belongs to the MsrB Met sulfoxide reductase family. Zn(2+) is required as a cofactor.

It carries out the reaction L-methionyl-[protein] + [thioredoxin]-disulfide + H2O = L-methionyl-(R)-S-oxide-[protein] + [thioredoxin]-dithiol. The polypeptide is Peptide methionine sulfoxide reductase MsrB (Escherichia coli (strain K12 / MC4100 / BW2952)).